The primary structure comprises 1122 residues: Histidine kinase CKI1 (1122 aa).

The Cytoplasmic segment spans residues 1–12; the sequence is MMVKVTKLVASR. Residues 13–33 traverse the membrane as a helical segment; the sequence is PIVVFCVLAFLVVVFECIWIS. The Extracellular portion of the chain corresponds to 34–345; sequence NWRTTTENLV…KHQAEKAKYQ (312 aa). Residues 346–366 form a helical membrane-spanning segment; sequence LIVVMIFLGFGWPVWFVWFMM. At 367–1122 the chain is on the cytoplasmic side; the sequence is QATRREMHMR…VIREIESKRH (756 aa). The Histidine kinase domain occupies 402–671; that stretch reads NASHDIRGAL…CFQFNVLLTT (270 aa). Residue H405 is modified to Phosphohistidine; by autocatalysis. A compositionally biased stretch (basic and acidic residues) spans 918–928; it reads AERSPKHKVQE. The segment at 918–981 is disordered; the sequence is AERSPKHKVQ…QETSKPSDDE (64 aa). The Response regulatory domain maps to 987–1120; sequence RVLVVDDNFI…ANVIREIESK (134 aa). Position 1050 is a 4-aspartylphosphate (D1050).

In terms of assembly, homodimer. Interacts with AHP2 and AHP3. Expressed in vascular tissues of inflorescence stems and floral organs, especially in procambium cells, and in siliques.

It is found in the cell membrane. It carries out the reaction ATP + protein L-histidine = ADP + protein N-phospho-L-histidine.. Its function is as follows. Essential protein. Functions as a histidine kinase and transmits the stress signal to a downstream MAPK cascade. This protein undergoes an ATP-dependent autophosphorylation at a conserved histidine residue in the kinase core, and a phosphoryl group is then transferred to a conserved aspartate residue in the receiver domain. Required for the development of megagametophyte in female gametophyte (embryo sac) independently of cytokinin. Contributes to vascular bundle formation and secondary growth in a cytokinin-independent manner, probably by promoting the maintenance of mitotic activity and/or identity of procambial cells. Seems to influence and promote the cytokinin signaling pathway. In Arabidopsis thaliana (Mouse-ear cress), this protein is Histidine kinase CKI1 (CKI1).